Here is a 335-residue protein sequence, read N- to C-terminus: Solute-binding protein Veis_3954 (335 aa).

Positions 1-34 are cleaved as a signal peptide; it reads MPSTRPLPRPSSRSLRRLALGLGLAFGLGATAAA. Residues Gln50, Glu82, 155 to 158, Arg179, and Asn219 contribute to the (R)-pantoate site; that span reads NGFR.

Belongs to the bacterial solute-binding protein 7 family. In terms of assembly, the complex is comprised of an extracytoplasmic solute-binding protein and a heteromeric permease formed by two transmembrane proteins.

It is found in the periplasm. In terms of biological role, solute-binding protein that binds (R)-pantoate and D-erythronate (in vitro). Probably part of a tripartite ATP-independent periplasmic (TRAP) transport system that mediates solute transport into the cytoplasm. This is Solute-binding protein Veis_3954 from Verminephrobacter eiseniae (strain EF01-2).